Consider the following 104-residue polypeptide: Thioredoxin-2 (104 aa).

In terms of domain architecture, Thioredoxin spans 2–104; it reads VTQLKSASEY…AIKQAIASNV (103 aa). Active-site nucleophile residues include Cys-31 and Cys-34. Cys-31 and Cys-34 form a disulfide bridge. Ser-62 is modified (phosphoserine). Residues Lys-67 and Lys-97 each participate in a glycyl lysine isopeptide (Lys-Gly) (interchain with G-Cter in ubiquitin) cross-link.

Belongs to the thioredoxin family. Monomer. Part of the heterodimeric LMA1 complex together with the proteinase inhibitor PBI2. LMA1 binds to the ATPase SEC18. Post-translationally, reversible disulfide bond formation between Cys-31 and Cys-34, reverted by thioredoxin reductase TRR1 using NADPH as hydrogen donor.

It is found in the cytoplasm. Its subcellular location is the golgi apparatus membrane. The protein resides in the nucleus. Its function is as follows. Participates as a hydrogen donor in redox reactions through the reversible oxidation of its active center dithiol to a disulfide, accompanied by the transfer of 2 electrons and 2 protons. It is involved in many cellular processes, including deoxyribonucleotide synthesis, repair of oxidatively damaged proteins, protein folding, sulfur metabolism, and redox homeostasis. Thioredoxin-dependent enzymes include phosphoadenosine-phosphosulfate reductase MET16, alkyl-hydroperoxide reductase DOT5, thioredoxin peroxidases TSA1 and TSA2, alkyl hydroperoxide reductase AHP1, and peroxiredoxin HYR1. Thioredoxin is also involved in protection against reducing stress. As part of the LMA1 complex, it is involved in the facilitation of vesicle fusion such as homotypic vacuole and ER-derived COPII vesicle fusion with the Golgi. This activity does not require the redox mechanism. Through its capacity to inactivate the stress response transcription factor YAP1 and its regulator the hydroperoxide stress sensor HYR1, it is involved in feedback regulation of stress response gene expression upon oxidative stress. The chain is Thioredoxin-2 (TRX2) from Saccharomyces cerevisiae (strain ATCC 204508 / S288c) (Baker's yeast).